The sequence spans 174 residues: Ribosome maturation factor RimM (174 aa).

Residues 98–171 enclose the PRC barrel domain; that stretch reads EDEFYFHEII…KIKIHVMEGL (74 aa).

Belongs to the RimM family. Binds ribosomal protein uS19.

The protein resides in the cytoplasm. An accessory protein needed during the final step in the assembly of 30S ribosomal subunit, possibly for assembly of the head region. Essential for efficient processing of 16S rRNA. May be needed both before and after RbfA during the maturation of 16S rRNA. It has affinity for free ribosomal 30S subunits but not for 70S ribosomes. In Bacillus velezensis (strain DSM 23117 / BGSC 10A6 / LMG 26770 / FZB42) (Bacillus amyloliquefaciens subsp. plantarum), this protein is Ribosome maturation factor RimM.